The sequence spans 1657 residues: Putative serine/threonine-protein kinase/receptor R826 (1657 aa).

Positions 1 to 23 (MRLNSQIVFCIVVVISCLSMIEC) are cleaved as a signal peptide. N-linked (GlcNAc...) asparagine; by host glycans are attached at residues Asn153, Asn178, Asn238, Asn255, Asn352, Asn454, Asn476, Asn494, and Asn596. A helical membrane pass occupies residues 742 to 762 (IILAVVIPIAFIIVCIICILV). One can recognise a Protein kinase 1 domain in the interval 786 to 1049 (LELGEQLGTG…EIMTRLSNLM (264 aa)). Residues 792–800 (LGTGAFGEV) and Lys813 each bind ATP. The active-site Proton acceptor is Asp909. Residues 1089 to 1115 (VQNSYNRTDSYDLGSNNSHSSITSDTN) form a disordered region. The Guanylate cyclase domain occupies 1134–1277 (VVVFTDIISA…PTVTTAAAVT (144 aa)). One can recognise a Protein kinase 2 domain in the interval 1399–1651 (IKMGEQIGLG…DDVIIVLAKF (253 aa)). Residues 1405–1413 (IGLGSYGVV) and Lys1426 contribute to the ATP site. The active-site Proton acceptor is the Asp1522.

It is found in the membrane. The catalysed reaction is L-seryl-[protein] + ATP = O-phospho-L-seryl-[protein] + ADP + H(+). It carries out the reaction L-threonyl-[protein] + ATP = O-phospho-L-threonyl-[protein] + ADP + H(+). The polypeptide is Putative serine/threonine-protein kinase/receptor R826 (Acanthamoeba polyphaga mimivirus (APMV)).